The sequence spans 391 residues: 4-hydroxy-3-methylbut-2-en-1-yl diphosphate synthase (flavodoxin) (391 aa).

The [4Fe-4S] cluster site is built by cysteine 286, cysteine 289, cysteine 321, and glutamate 328.

This sequence belongs to the IspG family. [4Fe-4S] cluster serves as cofactor.

It catalyses the reaction (2E)-4-hydroxy-3-methylbut-2-enyl diphosphate + oxidized [flavodoxin] + H2O + 2 H(+) = 2-C-methyl-D-erythritol 2,4-cyclic diphosphate + reduced [flavodoxin]. Its pathway is isoprenoid biosynthesis; isopentenyl diphosphate biosynthesis via DXP pathway; isopentenyl diphosphate from 1-deoxy-D-xylulose 5-phosphate: step 5/6. Converts 2C-methyl-D-erythritol 2,4-cyclodiphosphate (ME-2,4cPP) into 1-hydroxy-2-methyl-2-(E)-butenyl 4-diphosphate. This is 4-hydroxy-3-methylbut-2-en-1-yl diphosphate synthase (flavodoxin) from Corynebacterium diphtheriae (strain ATCC 700971 / NCTC 13129 / Biotype gravis).